Reading from the N-terminus, the 163-residue chain is Neurotrophin-3 (163 aa).

Residues 1 to 3 form the signal peptide; it reads IQS. A propeptide spanning residues 4 to 119 is cleaved from the precursor; sequence TSMDQGILTE…VLNRTSRRKR (116 aa). N-linked (GlcNAc...) asparagine glycosylation occurs at asparagine 112.

It belongs to the NGF-beta family.

The protein resides in the secreted. Its function is as follows. Seems to promote the survival of visceral and proprioceptive sensory neurons. This Epicrates cenchria (Rainbow boa) protein is Neurotrophin-3 (NTF3).